A 460-amino-acid polypeptide reads, in one-letter code: ATP synthase subunit beta (460 aa).

148–155 serves as a coordination point for ATP; it reads GGAGVGKT.

This sequence belongs to the ATPase alpha/beta chains family. As to quaternary structure, F-type ATPases have 2 components, CF(1) - the catalytic core - and CF(0) - the membrane proton channel. CF(1) has five subunits: alpha(3), beta(3), gamma(1), delta(1), epsilon(1). CF(0) has three main subunits: a(1), b(2) and c(9-12). The alpha and beta chains form an alternating ring which encloses part of the gamma chain. CF(1) is attached to CF(0) by a central stalk formed by the gamma and epsilon chains, while a peripheral stalk is formed by the delta and b chains.

The protein resides in the cell inner membrane. It carries out the reaction ATP + H2O + 4 H(+)(in) = ADP + phosphate + 5 H(+)(out). Functionally, produces ATP from ADP in the presence of a proton gradient across the membrane. The catalytic sites are hosted primarily by the beta subunits. The polypeptide is ATP synthase subunit beta (Alcanivorax borkumensis (strain ATCC 700651 / DSM 11573 / NCIMB 13689 / SK2)).